The following is a 291-amino-acid chain: MQEAALGMMGATVGGDGDTAVVAEQNRQLKGEIATHPMYEQLLAAHVACLRVATPIDQLPIIEAQLSQSHHLLRSYASTAVGYHHDRHELDNFLAQYVMVLCSFKEQLQQHVRVHAVEAVMACREIENNLHSLTGATLGEGSGATMSEDEDDLPMDFSSDNSGVDFSGGHDMTGFGPLLPTESERSLMERVRQELKLELKQGFKSRIEDVREEIMRKRRAGKLPGDTTTVLKNWWQQHCKWPYPTEDDKAKLVEETGLQLKQINNWFINQRKRNWHNNSHSLTSLKSKRKH.

Positions 194–214 (ELKLELKQGFKSRIEDVREEI) constitute an ELK domain. Residues 215 to 278 (MRKRRAGKLP…NQRKRNWHNN (64 aa)) constitute a DNA-binding region (homeobox; TALE-type).

Belongs to the TALE/KNOX homeobox family. As to quaternary structure, may form heterodimeric complex with the TALE/BELL proteins. Interacts with OFP1, OFP2, OFP3, OFP4 and OFP6.

It is found in the nucleus. Functionally, may be involved in secondary cell wall biosynthesis. This chain is Homeobox protein knotted-1-like 7 (KNAT7), found in Arabidopsis thaliana (Mouse-ear cress).